Reading from the N-terminus, the 348-residue chain is Rhodopsin (348 aa).

An N-acetylmethionine modification is found at M1. Residues 1–36 (MNGTEGPNFYVPFSNKTGVVRSPFEEPQYYLAEPWQ) lie on the Extracellular side of the membrane. N2 and N15 each carry an N-linked (GlcNAc...) asparagine glycan. The chain crosses the membrane as a helical span at residues 37 to 61 (FSCLAAYMFMLIVLGFPINFLTLYV). Topologically, residues 62 to 73 (TIQHKKLRTPLN) are cytoplasmic. Residues 74 to 96 (YILLNLAIADLFMVFGGFTTTLY) traverse the membrane as a helical segment. At 97–110 (TSLHGYFVFGPTGC) the chain is on the extracellular side. C110 and C187 are oxidised to a cystine. Residues 111 to 133 (DLEGFFATLGGEIALWSLVVLAI) form a helical membrane-spanning segment. The 'Ionic lock' involved in activated form stabilization signature appears at 134-136 (ERY). At 134–152 (ERYIVVCKPMSNFRFGENH) the chain is on the cytoplasmic side. A helical membrane pass occupies residues 153–173 (AIMGVAFTWVMALACAAPPLV). Residues 174-202 (GWSRYIPEGMQCSCGIDYYTLKPEVNNES) lie on the Extracellular side of the membrane. E201 provides a ligand contact to Zn(2+). A helical membrane pass occupies residues 203–224 (FVIYMFVVHFTIPMVVIFFCYG). The Cytoplasmic portion of the chain corresponds to 225–252 (QLVFTVKEAAAQQQESATTQKAEKEVTR). Residues 253 to 274 (MVIIMVIAFLICWLPYAGVAFY) form a helical membrane-spanning segment. At 275–286 (IFTHQGSNFGPI) the chain is on the extracellular side. Q279 provides a ligand contact to Zn(2+). A helical transmembrane segment spans residues 287–308 (LMTLPAFFAKTSAVYNPVIYIM). K296 carries the N6-(retinylidene)lysine modification. Residues 309 to 348 (LNKQFRTCMLTTLCCGKIPLGDDEASATASKTETSQVAPA) are Cytoplasmic-facing. 2 S-palmitoyl cysteine lipidation sites follow: C322 and C323. Residues 330-348 (DDEASATASKTETSQVAPA) are interaction with SAG. S334 carries the post-translational modification Phosphoserine. T336 carries the phosphothreonine modification. S338 carries the phosphoserine modification. Residues T340 and T342 each carry the phosphothreonine modification. S343 carries the post-translational modification Phosphoserine.

It belongs to the G-protein coupled receptor 1 family. Opsin subfamily. As to quaternary structure, homodimer. May form a complex composed of RHO, GRK1 and RCVRN in a Ca(2+)-dependent manner; RCVRN prevents the interaction between GRK1 and RHO. Interacts with GRK1. Interacts (phosphorylated form) with SAG. Interacts with GNAT1. Interacts with GNAT3. SAG and G-proteins compete for a common binding site. Interacts with PRCD; the interaction promotes PRCD stability. Forms a complex with ASAP1 and ARF4. Forms a complex with ASAP1, RAB11A, Rabin8/RAB3IP, ARF4 and RAB11FIP3; the complex regulates Golgi-to-cilia rhodopsin/RHO transport in photoreceptors. Phosphorylated on some or all of the serine and threonine residues present in the C-terminal region. In terms of processing, contains one covalently linked retinal chromophore. Upon light absorption, the covalently bound 11-cis-retinal is converted to all-trans-retinal. After hydrolysis of the Schiff base and release of the covalently bound all-trans-retinal, active rhodopsin is regenerated by binding of a fresh molecule of 11-cis-retinal.

The protein localises to the membrane. Its subcellular location is the cell projection. It localises to the cilium. The protein resides in the photoreceptor outer segment. Photoreceptor required for image-forming vision at low light intensity. Required for photoreceptor cell viability after birth. Light-induced isomerization of 11-cis to all-trans retinal triggers a conformational change that activates signaling via G-proteins. Subsequent receptor phosphorylation mediates displacement of the bound G-protein alpha subunit by the arrestin SAG and terminates signaling. The polypeptide is Rhodopsin (RHO) (Caluromys philander (Bare-tailed woolly opossum)).